Consider the following 63-residue polypeptide: Beta-defensin 38 (63 aa).

The first 21 residues, 1–21 (MKISCFLLLILSLYFFQINQA), serve as a signal peptide directing secretion. 3 disulfides stabilise this stretch: cysteine 29-cysteine 58, cysteine 36-cysteine 51, and cysteine 41-cysteine 59.

It belongs to the beta-defensin family. As to expression, only expressed in epididymis (caput, corpus and cauda).

It is found in the secreted. Functionally, synthetic Defb38 kills both Gram-negative (E.coli and P.aeruginosa) and Gram-positive (E.faecium) bacteria. This chain is Beta-defensin 38 (Defb38), found in Mus musculus (Mouse).